A 368-amino-acid polypeptide reads, in one-letter code: Flagellar P-ring protein (368 aa).

Residues 1–22 (MLIPLARAVLALELLGAGAAHA) form the signal peptide.

Belongs to the FlgI family. The basal body constitutes a major portion of the flagellar organelle and consists of four rings (L,P,S, and M) mounted on a central rod.

Its subcellular location is the periplasm. It is found in the bacterial flagellum basal body. In terms of biological role, assembles around the rod to form the L-ring and probably protects the motor/basal body from shearing forces during rotation. This is Flagellar P-ring protein from Bordetella pertussis (strain Tohama I / ATCC BAA-589 / NCTC 13251).